Here is a 118-residue protein sequence, read N- to C-terminus: uncharacterized protein (118 aa).

Positions 6–104 (CGFEVTKEVI…WGGYYAEQEY (99 aa)) constitute an HTH hxlR-type domain.

This is an uncharacterized protein from Bacillus subtilis (strain 168).